Reading from the N-terminus, the 184-residue chain is dCTP deaminase (184 aa).

DCTP contacts are provided by residues 107 to 112 (KSTYAR), 131 to 133 (TLE), Gln152, Tyr166, and Gln176. Glu133 functions as the Proton donor/acceptor in the catalytic mechanism.

The protein belongs to the dCTP deaminase family. As to quaternary structure, homotrimer.

It carries out the reaction dCTP + H2O + H(+) = dUTP + NH4(+). It participates in pyrimidine metabolism; dUMP biosynthesis; dUMP from dCTP (dUTP route): step 1/2. In terms of biological role, catalyzes the deamination of dCTP to dUTP. The chain is dCTP deaminase from Rhodospirillum centenum (strain ATCC 51521 / SW).